The chain runs to 110 residues: Large ribosomal subunit protein uL22 (110 aa).

This sequence belongs to the universal ribosomal protein uL22 family. As to quaternary structure, part of the 50S ribosomal subunit.

This protein binds specifically to 23S rRNA; its binding is stimulated by other ribosomal proteins, e.g. L4, L17, and L20. It is important during the early stages of 50S assembly. It makes multiple contacts with different domains of the 23S rRNA in the assembled 50S subunit and ribosome. Its function is as follows. The globular domain of the protein is located near the polypeptide exit tunnel on the outside of the subunit, while an extended beta-hairpin is found that lines the wall of the exit tunnel in the center of the 70S ribosome. This Pseudomonas savastanoi pv. phaseolicola (strain 1448A / Race 6) (Pseudomonas syringae pv. phaseolicola (strain 1448A / Race 6)) protein is Large ribosomal subunit protein uL22.